The chain runs to 532 residues: uncharacterized protein (532 aa).

A run of 13 helical transmembrane segments spans residues M13–L33, W53–I73, S80–P100, I111–F131, I142–I162, I169–F189, L203–G223, I231–L251, V273–L293, L306–F326, L334–I354, I361–T381, and I483–F503.

It belongs to the major facilitator superfamily. EmrB family.

It is found in the cell membrane. This is an uncharacterized protein from Bacillus subtilis (strain 168).